Here is a 300-residue protein sequence, read N- to C-terminus: Diphthine methyl ester synthase (300 aa).

S-adenosyl-L-methionine contacts are provided by residues Leu-9, Asp-85, Gly-88, 113 to 114 (SV), Leu-164, Leu-222, and His-247.

The protein belongs to the diphthine synthase family.

The protein resides in the cytoplasm. It carries out the reaction 2-[(3S)-amino-3-carboxypropyl]-L-histidyl-[translation elongation factor 2] + 4 S-adenosyl-L-methionine = diphthine methyl ester-[translation elongation factor 2] + 4 S-adenosyl-L-homocysteine + 3 H(+). It functions in the pathway protein modification; peptidyl-diphthamide biosynthesis. Functionally, S-adenosyl-L-methionine-dependent methyltransferase that catalyzes four methylations of the modified target histidine residue in translation elongation factor 2 (EF-2), to form an intermediate called diphthine methyl ester. The four successive methylation reactions represent the second step of diphthamide biosynthesis. The polypeptide is Diphthine methyl ester synthase (DPH5) (Yarrowia lipolytica (strain CLIB 122 / E 150) (Yeast)).